A 49-amino-acid chain; its full sequence is Large ribosomal subunit protein bL33A (49 aa).

This sequence belongs to the bacterial ribosomal protein bL33 family.

The protein is Large ribosomal subunit protein bL33A of Limosilactobacillus reuteri subsp. reuteri (strain JCM 1112) (Lactobacillus reuteri).